Reading from the N-terminus, the 229-residue chain is Allatostatin-A (229 aa).

The signal sequence occupies residues 1–18; sequence MLSTSLPVCFLVIGAALC. The propeptide occupies 19 to 48; that stretch reads APERMQNDPDPHDSTAQGSDNHSDHIAPLA. The segment at 23–46 is disordered; the sequence is MQNDPDPHDSTAQGSDNHSDHIAP. Leucine amide is present on leucine 58. A propeptide spanning residues 62 to 80 is cleaved from the precursor; it reads AYSYVSEYKRLPVYNFGLG. Leucine 90 is subject to Leucine amide. The propeptide occupies 94–130; it reads SVDEDQTNDDQQQIMNNDLDQAALAEFFDQYDDAGYE. At leucine 140 the chain carries Leucine amide. A propeptide spanning residues 144–152 is cleaved from the precursor; it reads FADDDTSEE. Residues leucine 162, leucine 173, leucine 184, leucine 196, and leucine 210 each carry the leucine amide modification. Positions 214–229 are excised as a propeptide; it reads SADDASTEDSDNYFDV.

This sequence belongs to the allatostatin family. As to expression, allatostatin-A-1: Expressed in antennal lobe (AL), corpora cardiaca (CC), corpora allata (CA) and gnathal ganglion (GNG) (at protein level). Expression in AL and GNG detected in most animals, in CC and CA in some animals (at protein level). Allatostatin-A-3: Expressed in antennal lobe (AL), corpora cardiaca (CC), corpora allata (CA) and gnathal ganglion (GNG) (at protein level). Expression in AL detected in all animals, in GNG, CC and CA in most animals (at protein level). Allatostatin-A-4: Expressed in antennal lobe (AL), corpora cardiaca (CC), corpora allata (CA) and gnathal ganglion (GNG) in all animals (at protein level). Allatostatin-A-5: Expressed in antennal lobe (AL), corpora cardiaca (CC), corpora allata (CA) and gnathal ganglion (GNG) in all animals (at protein level). Allatostatin-A-6: Expressed in antennal lobe (AL) and gnathal ganglion (GNG) (at protein level). Expression in AL detected in some animals, in GNG in few animals (at protein level). Not expressed in corpora cardiaca (CC) and corpora allata (CA) (at protein level). Allatostatin-A-7: Expressed in antennal lobe (AL), corpora cardiaca (CC), corpora allata (CA) and gnathal ganglion (GNG) (at protein level). Expression in AL detected in all animals, in GNG, CC and CA in most animals (at protein level). Allatostatin-A-8: Expressed in antennal lobe (AL), corpora cardiaca (CC), corpora allata (CA) and gnathal ganglion (GNG) (at protein level). Expression in AL detected in all animals, in GNG, CC and CA in most animals (at protein level). Allatostatin-A-9: Expressed in antennal lobe (AL), corpora cardiaca (CC), corpora allata (CA) and gnathal ganglion (GNG) (at protein level). Expression in AL detected in all animals, in GNG in most animals and in CC and CA in some animals (at protein level).

The protein resides in the secreted. In terms of biological role, neuropeptide inhibitors of juvenile hormone synthesis and gut muscle contraction. The sequence is that of Allatostatin-A from Agrotis ipsilon (Black cutworm moth).